The chain runs to 673 residues: DNA ligase (673 aa).

Residues aspartate 34–aspartate 38, serine 83–leucine 84, and glutamate 116 contribute to the NAD(+) site. The N6-AMP-lysine intermediate role is filled by lysine 118. Residues arginine 139, glutamate 176, lysine 293, and lysine 317 each contribute to the NAD(+) site. Zn(2+)-binding residues include cysteine 411, cysteine 414, cysteine 429, and cysteine 435. The BRCT domain occupies asparagine 595–serine 673.

This sequence belongs to the NAD-dependent DNA ligase family. LigA subfamily. The cofactor is Mg(2+). Requires Mn(2+) as cofactor.

It catalyses the reaction NAD(+) + (deoxyribonucleotide)n-3'-hydroxyl + 5'-phospho-(deoxyribonucleotide)m = (deoxyribonucleotide)n+m + AMP + beta-nicotinamide D-nucleotide.. Its function is as follows. DNA ligase that catalyzes the formation of phosphodiester linkages between 5'-phosphoryl and 3'-hydroxyl groups in double-stranded DNA using NAD as a coenzyme and as the energy source for the reaction. It is essential for DNA replication and repair of damaged DNA. This chain is DNA ligase, found in Legionella pneumophila (strain Corby).